The sequence spans 456 residues: Bifunctional protein GlmU (456 aa).

The segment at 1–229 (MSNSAMSVVI…LSEVEGVNNR (229 aa)) is pyrophosphorylase. Residues 11–14 (LAAG), Lys-25, Gln-76, 81–82 (GT), 103–105 (YGD), Gly-140, Glu-154, Asn-169, and Asn-227 each bind UDP-N-acetyl-alpha-D-glucosamine. Residue Asp-105 participates in Mg(2+) binding. Mg(2+) is bound at residue Asn-227. The segment at 230–250 (LQLSALERVYQREQADRLLLA) is linker. Residues 251–456 (GVMLLDPARF…SGWQRPVKKK (206 aa)) are N-acetyltransferase. Residues Arg-333 and Lys-351 each contribute to the UDP-N-acetyl-alpha-D-glucosamine site. His-363 acts as the Proton acceptor in catalysis. The UDP-N-acetyl-alpha-D-glucosamine site is built by Tyr-366 and Asn-377. Acetyl-CoA-binding positions include Ala-380, 386-387 (NY), Ser-405, Ala-423, and Arg-440.

It in the N-terminal section; belongs to the N-acetylglucosamine-1-phosphate uridyltransferase family. In the C-terminal section; belongs to the transferase hexapeptide repeat family. As to quaternary structure, homotrimer. It depends on Mg(2+) as a cofactor.

Its subcellular location is the cytoplasm. The catalysed reaction is alpha-D-glucosamine 1-phosphate + acetyl-CoA = N-acetyl-alpha-D-glucosamine 1-phosphate + CoA + H(+). It carries out the reaction N-acetyl-alpha-D-glucosamine 1-phosphate + UTP + H(+) = UDP-N-acetyl-alpha-D-glucosamine + diphosphate. Its pathway is nucleotide-sugar biosynthesis; UDP-N-acetyl-alpha-D-glucosamine biosynthesis; N-acetyl-alpha-D-glucosamine 1-phosphate from alpha-D-glucosamine 6-phosphate (route II): step 2/2. The protein operates within nucleotide-sugar biosynthesis; UDP-N-acetyl-alpha-D-glucosamine biosynthesis; UDP-N-acetyl-alpha-D-glucosamine from N-acetyl-alpha-D-glucosamine 1-phosphate: step 1/1. It participates in bacterial outer membrane biogenesis; LPS lipid A biosynthesis. Its function is as follows. Catalyzes the last two sequential reactions in the de novo biosynthetic pathway for UDP-N-acetylglucosamine (UDP-GlcNAc). The C-terminal domain catalyzes the transfer of acetyl group from acetyl coenzyme A to glucosamine-1-phosphate (GlcN-1-P) to produce N-acetylglucosamine-1-phosphate (GlcNAc-1-P), which is converted into UDP-GlcNAc by the transfer of uridine 5-monophosphate (from uridine 5-triphosphate), a reaction catalyzed by the N-terminal domain. The protein is Bifunctional protein GlmU of Pectobacterium carotovorum subsp. carotovorum (strain PC1).